Reading from the N-terminus, the 451-residue chain is Phosphoglucosamine mutase (451 aa).

Ser-107 serves as the catalytic Phosphoserine intermediate. Mg(2+) is bound by residues Ser-107, Asp-246, Asp-248, and Asp-250. Ser-107 carries the phosphoserine modification.

This sequence belongs to the phosphohexose mutase family. The cofactor is Mg(2+). Activated by phosphorylation.

It carries out the reaction alpha-D-glucosamine 1-phosphate = D-glucosamine 6-phosphate. Catalyzes the conversion of glucosamine-6-phosphate to glucosamine-1-phosphate. The sequence is that of Phosphoglucosamine mutase from Burkholderia lata (strain ATCC 17760 / DSM 23089 / LMG 22485 / NCIMB 9086 / R18194 / 383).